The chain runs to 482 residues: uncharacterized protein (482 aa).

In terms of domain architecture, AB hydrolase-1 spans 231-459; the sequence is FEGNAGFYEI…FDACNHYLID (229 aa).

This is an uncharacterized protein from Caenorhabditis elegans.